Reading from the N-terminus, the 567-residue chain is Zinc finger protein 143 (567 aa).

7 C2H2-type zinc fingers span residues 230–254 (FRCDYEGCGKLYTTAHHLKVHERSH), 260–284 (YQCDHGGCRKAFATGYGLKSHVRTH), 290–314 (YRCSEENCTKSFKTSGDLQKHVRTH), 320–344 (FKCPFEGCGRSFTTSNIRKVHIRTH), 350–374 (YYCSEPGCGRAFASATNYKNHVRIH), 380–404 (YVCTVPGCDKRFTEYSSLYKHHVVH), and 410–433 (YNCNHCGKTYKQISTLAMHKRTAH). A compositionally biased stretch (polar residues) spans 506-520 (SATESGPQHSHNLGG). The segment at 506–525 (SATESGPQHSHNLGGSESRP) is disordered.

It belongs to the GLI C2H2-type zinc-finger protein family.

Its subcellular location is the nucleus. In terms of biological role, transcriptional activator. Activates the gene for selenocysteine tRNA (tRNAsec). Binds to the activator element (AE) motif of the selenocysteine tRNA gene promoter. The polypeptide is Zinc finger protein 143 (znf143) (Xenopus tropicalis (Western clawed frog)).